A 207-amino-acid chain; its full sequence is Vascular endothelial growth factor B (207 aa).

A signal peptide spans 1–21 (MSPLLRRLLLAVLLQLAPAQA). 3 cysteine pairs are disulfide-bonded: cysteine 47–cysteine 89, cysteine 78–cysteine 122, and cysteine 82–cysteine 124. Over residues 124-139 (CRPKKRESAVKPDRAS) the composition is skewed to basic and acidic residues. Residues 124–207 (CRPKKRESAV…AASSVVKGGA (84 aa)) form a disordered region. Low complexity predominate over residues 174–201 (PSAHAAPSAASALTPGPATAAADAAASS).

The protein belongs to the PDGF/VEGF growth factor family. Homodimer; disulfide-linked. Can also form heterodimer with VEGF. In terms of processing, VEGF-B186 is O-glycosylated.

It is found in the secreted. Growth factor for endothelial cells. VEGF-B167 binds heparin and neuropilin-1 whereas the binding to neuropilin-1 of VEGF-B186 is regulated by proteolysis. This Bos taurus (Bovine) protein is Vascular endothelial growth factor B (VEGFB).